The primary structure comprises 431 residues: ATP-dependent RNA helicase DBP8 (431 aa).

The short motif at 2 to 30 (ADFKSLGLSKWLTESLRAMKITQPTAIQK) is the Q motif element. In terms of domain architecture, Helicase ATP-binding spans 33-209 (IPKILEGRDC…NAPVQKGKPP (177 aa)). 46-53 (AKTGSGKT) is a binding site for ATP. The short motif at 155–158 (DEAD) is the DEAD box element. In terms of domain architecture, Helicase C-terminal spans 242 to 389 (YLYQLLTCEE…TNKVHDTAVI (148 aa)). The tract at residues 404 to 431 (LMAMQKENFGERKRQQKKKQNDGKSLRS) is disordered. A compositionally biased stretch (basic and acidic residues) spans 411–431 (NFGERKRQQKKKQNDGKSLRS).

Belongs to the DEAD box helicase family. DDX49/DBP8 subfamily. As to quaternary structure, interacts with ESF2.

It localises to the nucleus. The protein localises to the nucleolus. It catalyses the reaction ATP + H2O = ADP + phosphate + H(+). Its function is as follows. ATP-binding RNA helicase involved in 40S ribosomal subunit biogenesis and is required for the normal formation of 18S rRNAs through pre-rRNA processing at A0, A1 and A2 sites. Required for vegetative growth. In Saccharomyces cerevisiae (strain YJM789) (Baker's yeast), this protein is ATP-dependent RNA helicase DBP8 (DBP8).